Reading from the N-terminus, the 656-residue chain is MAEEEPRIGVYVCHCGVNIAGVVDVKEVAEFAKTLKNVVVARDYKYVCSDPGQEIIQRDIEKYDLNRVVVAACSPRLHEPTFRRCVEEAGLNPYCFEMANIREHCSWVHMDDPARATEKAKDLVRMAVAKARLLESLETIKVDVTDRALVIGGGVSGIQAALDLADMGFEVILVEKEPSIGGRMAQLDKTFPTNDCSICILAPKMVDVSKHPNIKMYTYAEVVEVDGYVGNFTVKIEKKPRYVDEDACTGCGACAEVCPIEVPNEFDEGLGMRKAIYKPFPQAVPSVFTIDEEHCIRCGLCEEVCDADAIDFDQEPEIVEEEVGAIICAIGYDTCDPTEREEYGYGVYDNVITSIELERLINASGPTGGKVVRPSDGKKPKRIAFIQCVGSRDPHRTNPYCSNVCCMYAMKLAQLIREKYPETQIDIYYMDVRAFGKGYEEYYERSQKQYGIRFIRGRPAEIVEDPETKNLIVRAEDTLLGDVVEREYDLVVLSVGMVPRDSADVIQEVLSISRSPDGFFMEAHPKLRPVDTAIDGIFLAGACQGPKDIPSSVAQGSAAAARAATALAAGEVAVEPIVSEVDEEICGGCGTCVELCPYGAIELVEKDGKLVAEVTAALCKGCGTCAAACPSGAMEQNHFKTEQLYKQIEGAFRDPA.

Gly-152–Glu-175 is an FAD binding site. 4Fe-4S ferredoxin-type domains lie at Lys-238–Gly-269, Ser-286–Glu-315, Ile-577–Lys-606, and Leu-610–Phe-639. Positions 248, 251, 254, 258, 295, 298, 301, 305, 586, 589, 592, 596, 619, 622, 625, and 629 each coordinate [4Fe-4S] cluster.

The protein belongs to the HdrA family. The ferredoxin:CoB-CoM heterodisulfide reductase is composed of three subunits; HdrA, HdrB and HdrC. [4Fe-4S] cluster serves as cofactor. Requires FAD as cofactor.

The protein operates within cofactor metabolism; coenzyme M-coenzyme B heterodisulfide reduction; coenzyme B and coenzyme M from coenzyme M-coenzyme B heterodisulfide: step 1/1. Part of a complex that catalyzes the reversible reduction of CoM-S-S-CoB to the thiol-coenzymes H-S-CoM (coenzyme M) and H-S-CoB (coenzyme B). The chain is CoB--CoM heterodisulfide reductase iron-sulfur subunit A 2 (hdrA2) from Methanopyrus kandleri (strain AV19 / DSM 6324 / JCM 9639 / NBRC 100938).